A 157-amino-acid chain; its full sequence is Protein GrpE (157 aa).

A compositionally biased stretch (basic and acidic residues) spans 1 to 10; that stretch reads MQEENQHPEQ. The segment at 1-21 is disordered; sequence MQEENQHPEQDDISEAQDAGA.

The protein belongs to the GrpE family. In terms of assembly, homodimer.

The protein resides in the cytoplasm. In terms of biological role, participates actively in the response to hyperosmotic and heat shock by preventing the aggregation of stress-denatured proteins, in association with DnaK and GrpE. It is the nucleotide exchange factor for DnaK and may function as a thermosensor. Unfolded proteins bind initially to DnaJ; upon interaction with the DnaJ-bound protein, DnaK hydrolyzes its bound ATP, resulting in the formation of a stable complex. GrpE releases ADP from DnaK; ATP binding to DnaK triggers the release of the substrate protein, thus completing the reaction cycle. Several rounds of ATP-dependent interactions between DnaJ, DnaK and GrpE are required for fully efficient folding. The chain is Protein GrpE from Methylovorus sp. (strain SS1 / DSM 11726).